The sequence spans 49 residues: Large ribosomal subunit protein bL33A (49 aa).

This sequence belongs to the bacterial ribosomal protein bL33 family.

The polypeptide is Large ribosomal subunit protein bL33A (Staphylococcus saprophyticus subsp. saprophyticus (strain ATCC 15305 / DSM 20229 / NCIMB 8711 / NCTC 7292 / S-41)).